We begin with the raw amino-acid sequence, 351 residues long: tRNA uridine(34) hydroxylase (351 aa).

The Rhodanese domain occupies 146–240 (DDPQALFVDM…YARRAREQGL (95 aa)). The Cysteine persulfide intermediate role is filled by C200.

The protein belongs to the TrhO family.

The enzyme catalyses uridine(34) in tRNA + AH2 + O2 = 5-hydroxyuridine(34) in tRNA + A + H2O. Functionally, catalyzes oxygen-dependent 5-hydroxyuridine (ho5U) modification at position 34 in tRNAs. In Sodalis glossinidius (strain morsitans), this protein is tRNA uridine(34) hydroxylase.